The chain runs to 204 residues: Urease accessory protein UreG (204 aa).

12–19 (GPVGSGKT) is a binding site for GTP.

It belongs to the SIMIBI class G3E GTPase family. UreG subfamily. As to quaternary structure, homodimer. UreD, UreF and UreG form a complex that acts as a GTP-hydrolysis-dependent molecular chaperone, activating the urease apoprotein by helping to assemble the nickel containing metallocenter of UreC. The UreE protein probably delivers the nickel.

It localises to the cytoplasm. Functionally, facilitates the functional incorporation of the urease nickel metallocenter. This process requires GTP hydrolysis, probably effectuated by UreG. The sequence is that of Urease accessory protein UreG from Hahella chejuensis (strain KCTC 2396).